A 199-amino-acid polypeptide reads, in one-letter code: Recombination protein RecR (199 aa).

Residues 58–73 form a C4-type zinc finger; that stretch reads CRRCFNLTEGEECDIC. Residues 81–176 enclose the Toprim domain; sequence SVICVVEDPY…RVTALASGLP (96 aa).

The protein belongs to the RecR family.

Its function is as follows. May play a role in DNA repair. It seems to be involved in an RecBC-independent recombinational process of DNA repair. It may act with RecF and RecO. The polypeptide is Recombination protein RecR (Rubrobacter xylanophilus (strain DSM 9941 / JCM 11954 / NBRC 16129 / PRD-1)).